Here is a 521-residue protein sequence, read N- to C-terminus: Probable tRNA (uracil-O(2)-)-methyltransferase (521 aa).

This sequence belongs to the TRM44 family.

It localises to the cytoplasm. The enzyme catalyses uridine(44) in tRNA(Ser) + S-adenosyl-L-methionine = 2'-O-methyluridine(44) in tRNA(Ser) + S-adenosyl-L-homocysteine + H(+). In terms of biological role, probable adenosyl-L-methionine (AdoMet)-dependent tRNA (uracil-O(2)-)-methyltransferase. In Drosophila melanogaster (Fruit fly), this protein is Probable tRNA (uracil-O(2)-)-methyltransferase (trmt44).